The primary structure comprises 616 residues: Dihydroxy-acid dehydratase (616 aa).

A Mg(2+)-binding site is contributed by Asp-81. Cys-122 contributes to the [2Fe-2S] cluster binding site. Residues Asp-123 and Lys-124 each coordinate Mg(2+). The residue at position 124 (Lys-124) is an N6-carboxylysine. Cys-195 lines the [2Fe-2S] cluster pocket. Glu-491 provides a ligand contact to Mg(2+). Ser-517 functions as the Proton acceptor in the catalytic mechanism.

This sequence belongs to the IlvD/Edd family. Homodimer. Requires [2Fe-2S] cluster as cofactor. The cofactor is Mg(2+).

It catalyses the reaction (2R)-2,3-dihydroxy-3-methylbutanoate = 3-methyl-2-oxobutanoate + H2O. The catalysed reaction is (2R,3R)-2,3-dihydroxy-3-methylpentanoate = (S)-3-methyl-2-oxopentanoate + H2O. The protein operates within amino-acid biosynthesis; L-isoleucine biosynthesis; L-isoleucine from 2-oxobutanoate: step 3/4. It participates in amino-acid biosynthesis; L-valine biosynthesis; L-valine from pyruvate: step 3/4. Functionally, functions in the biosynthesis of branched-chain amino acids. Catalyzes the dehydration of (2R,3R)-2,3-dihydroxy-3-methylpentanoate (2,3-dihydroxy-3-methylvalerate) into 2-oxo-3-methylpentanoate (2-oxo-3-methylvalerate) and of (2R)-2,3-dihydroxy-3-methylbutanoate (2,3-dihydroxyisovalerate) into 2-oxo-3-methylbutanoate (2-oxoisovalerate), the penultimate precursor to L-isoleucine and L-valine, respectively. The protein is Dihydroxy-acid dehydratase of Salmonella gallinarum (strain 287/91 / NCTC 13346).